The chain runs to 145 residues: UPF0735 ACT domain-containing protein CLH_2637 (145 aa).

The ACT domain maps to 69–144 (TFNLIVKDQT…YVEKIEFVAM (76 aa)).

This sequence belongs to the UPF0735 family.

This chain is UPF0735 ACT domain-containing protein CLH_2637, found in Clostridium botulinum (strain Alaska E43 / Type E3).